The chain runs to 329 residues: Short-chain dehydrogenase/reductase prx4 (329 aa).

The NADP(+) site is built by Ser-58, Ile-60, and Asn-81. Asn-91 carries an N-linked (GlcNAc...) asparagine glycan. Positions 98, 121, 161, 194, 198, and 229 each coordinate NADP(+). The active-site Proton acceptor is Tyr-194. The active-site Lowers pKa of active site Tyr is the Lys-198. The chain crosses the membrane as a helical span at residues 238–258 (GPLMAAGLPVSSAHMVGLAVV).

The protein belongs to the short-chain dehydrogenases/reductases (SDR) family.

It is found in the membrane. It participates in sesquiterpene biosynthesis. In terms of biological role, short-chain dehydrogenase/reductase; part of the gene cluster that mediates the biosynthesis of PR-toxin, a bicyclic sesquiterpene belonging to the eremophilane class and acting as a mycotoxin. The first step of the pathway is catalyzed by the aristolochene synthase which performs the cyclization of trans,trans-farnesyl diphosphate (FPP) to the bicyclic sesquiterpene aristolochene. Following the formation of aristolochene, the non-oxygenated aristolochene is converted to the trioxygenated intermediate eremofortin B, via 7-epi-neopetasone. This conversion appears to involve three enzymes, a hydroxysterol oxidase-like enzyme, the quinone-oxidase prx3 that forms the quinone-type-structure in the bicyclic nucleus of aristolochene with the C8-oxo group and the C-3 hydroxyl group, and the P450 monooxygenase ORF6 that introduces the epoxide at the double bond between carbons 1 and 2. No monoxy or dioxy-intermediates have been reported to be released to the broth, so these three early oxidative reactions may be coupled together. Eremofortin B is further oxidized by another P450 monooxygenase, that introduces a second epoxide between carbons 7 and 11 prior to acetylation to eremofortin A by the acetyltransferase ORF8. The second epoxidation may be performed by a second P450 monooxygenase. After the acetylation step, eremofortin A is converted to eremofortin C and then to PR-toxin. First the conversion of eremofortin A to eremofortin C proceeds by oxidation of the side chain of the molecule at C-12 and is catalyzed by the short-chain oxidoreductase prx1. The cytochrome P450 monooxygenase ORF6 is probably also involved in this step. The primary alcohol formed at C-12 is finally oxidized by the short-chain alcohol dehydrogenase prx4 that forms PR-toxin. This Penicillium roqueforti protein is Short-chain dehydrogenase/reductase prx4.